A 145-amino-acid chain; its full sequence is Neutral phospholipase A2 paradoxin-like beta chain (145 aa).

The N-terminal stretch at 1–27 (MHPAHLLVLLAVCVSLLGASDIPPLPL) is a signal peptide. 7 cysteine pairs are disulfide-bonded: C38/C98, C54/C144, C56/C72, C71/C125, C78/C118, C87/C111, and C105/C116.

It belongs to the phospholipase A2 family. Group I subfamily. N49 sub-subfamily. As to quaternary structure, heterotrimer of alpha, beta, and gamma chains; non-covalently linked. Expressed by the venom gland.

It is found in the secreted. Its function is as follows. Heterotrimer: Snake venom phospholipase A2 (PLA2) heterotrimer that acts as a potent presynaptic neurotoxin by blocking synaptic transmission and synaptic vesicle recycling. May act by binding in a calcium-dependent fashion to neurotonal pentraxin-1 (NPTX1) and neurotonal pentraxin-2 (NPTX2), but not to neuronal pentraxin receptor (NPTXR). Also binds to taipoxin-associated calcium binding protein 49 (RCN2), a protein localized in the lumen of endoplasmic reticulum. Functionally, monomer (beta chain): Snake venom phospholipase A2 homolog that is neither toxic nor enzymatically active. Does not bind calcium. The polypeptide is Neutral phospholipase A2 paradoxin-like beta chain (Oxyuranus microlepidotus (Inland taipan)).